We begin with the raw amino-acid sequence, 82 residues long: Small ribosomal subunit protein bS20 (82 aa).

The protein belongs to the bacterial ribosomal protein bS20 family.

Binds directly to 16S ribosomal RNA. The chain is Small ribosomal subunit protein bS20 from Lysinibacillus sphaericus (strain C3-41).